The sequence spans 72 residues: uncharacterized protein (72 aa).

The chain crosses the membrane as a helical span at residues 33–53; that stretch reads VCIFFSLIFFFFFFFFCVNWG.

It localises to the membrane. This is an uncharacterized protein from Dictyostelium discoideum (Social amoeba).